The chain runs to 222 residues: Eukaryotic translation initiation factor 3 subunit K (222 aa).

Residues 46-208 (YDLEANLAVL…KIKTKNITEK (163 aa)) form the PCI domain.

This sequence belongs to the eIF-3 subunit K family. Component of the eukaryotic translation initiation factor 3 (eIF-3) complex. The eIF-3 complex interacts with pix.

The protein resides in the cytoplasm. Its function is as follows. Component of the eukaryotic translation initiation factor 3 (eIF-3) complex, which is involved in protein synthesis of a specialized repertoire of mRNAs and, together with other initiation factors, stimulates binding of mRNA and methionyl-tRNAi to the 40S ribosome. The eIF-3 complex specifically targets and initiates translation of a subset of mRNAs involved in cell proliferation. This Drosophila sechellia (Fruit fly) protein is Eukaryotic translation initiation factor 3 subunit K.